Consider the following 209-residue polypeptide: Large ribosomal subunit protein bL25 (209 aa).

The segment at 185-209 (SKATTGEEEGAEAAGEGEEAEEKPE) is disordered. Positions 190–209 (GEEEGAEAAGEGEEAEEKPE) are enriched in acidic residues.

It belongs to the bacterial ribosomal protein bL25 family. CTC subfamily. As to quaternary structure, part of the 50S ribosomal subunit; part of the 5S rRNA/L5/L18/L25 subcomplex. Contacts the 5S rRNA. Binds to the 5S rRNA independently of L5 and L18.

Functionally, this is one of the proteins that binds to the 5S RNA in the ribosome where it forms part of the central protuberance. This chain is Large ribosomal subunit protein bL25, found in Syntrophomonas wolfei subsp. wolfei (strain DSM 2245B / Goettingen).